Consider the following 306-residue polypeptide: Ornithine carbamoyltransferase, anabolic (306 aa).

Residues 46–49 (STRT), Gln73, Arg97, and 124–127 (HPTQ) each bind carbamoyl phosphate. L-ornithine-binding positions include Asn156, Asp220, and 224 to 225 (SM). Carbamoyl phosphate-binding positions include 260-261 (CL) and Arg288.

The protein belongs to the aspartate/ornithine carbamoyltransferase superfamily. OTCase family. Homohexamer; dimer of trimers.

The protein localises to the cytoplasm. The enzyme catalyses carbamoyl phosphate + L-ornithine = L-citrulline + phosphate + H(+). The protein operates within amino-acid biosynthesis; L-arginine biosynthesis; L-arginine from L-ornithine and carbamoyl phosphate: step 1/3. In terms of biological role, reversibly catalyzes the transfer of the carbamoyl group from carbamoyl phosphate (CP) to the N(epsilon) atom of ornithine (ORN) to produce L-citrulline, which is a substrate for argininosuccinate synthetase (ArgG) involved in the final step in arginine biosynthesis. The protein is Ornithine carbamoyltransferase, anabolic of Campylobacter jejuni subsp. jejuni serotype O:2 (strain ATCC 700819 / NCTC 11168).